Here is a 165-residue protein sequence, read N- to C-terminus: Small ribosomal subunit protein bS16 (165 aa).

Residues 110–165 (LSEANNGPTAEAITEKKKKAREDKEAKEAAEKAAAEKAAAAESEEAPAEEAAAEEA) form a disordered region. Residues 129–144 (AREDKEAKEAAEKAAA) are compositionally biased toward basic and acidic residues. Positions 151–165 (ESEEAPAEEAAAEEA) are enriched in acidic residues.

The protein belongs to the bacterial ribosomal protein bS16 family.

The polypeptide is Small ribosomal subunit protein bS16 (Corynebacterium glutamicum (strain R)).